Reading from the N-terminus, the 95-residue chain is Small ribosomal subunit protein bS6 (95 aa).

Belongs to the bacterial ribosomal protein bS6 family.

Its function is as follows. Binds together with bS18 to 16S ribosomal RNA. The sequence is that of Small ribosomal subunit protein bS6 from Streptococcus agalactiae serotype Ia (strain ATCC 27591 / A909 / CDC SS700).